The sequence spans 432 residues: Aspartate aminotransferase (432 aa).

Substrate is bound at residue 45–46; the sequence is RG. Residue 109-111 coordinates pyridoxal 5'-phosphate; that stretch reads SSL. Substrate is bound at residue 148–150; that stretch reads YDR. Residues Asn-197, Tyr-229, and 262 to 265 contribute to the pyridoxal 5'-phosphate site; that span reads STSK. Arg-400 lines the substrate pocket.

Belongs to the class-I pyridoxal-phosphate-dependent aminotransferase family. In terms of assembly, homodimer. Pyridoxal 5'-phosphate serves as cofactor.

It catalyses the reaction L-aspartate + 2-oxoglutarate = oxaloacetate + L-glutamate. In Corynebacterium glutamicum (strain ATCC 13032 / DSM 20300 / JCM 1318 / BCRC 11384 / CCUG 27702 / LMG 3730 / NBRC 12168 / NCIMB 10025 / NRRL B-2784 / 534), this protein is Aspartate aminotransferase.